The primary structure comprises 229 residues: Ribonuclease 3 (229 aa).

The RNase III domain occupies Val-3–Asn-125. Residue Glu-38 participates in Mg(2+) binding. Residue Asp-42 is part of the active site. Asn-111 and Glu-114 together coordinate Mg(2+). Glu-114 is an active-site residue. Positions Asp-155–His-225 constitute a DRBM domain.

Belongs to the ribonuclease III family. In terms of assembly, homodimer. Mg(2+) is required as a cofactor.

The protein localises to the cytoplasm. It catalyses the reaction Endonucleolytic cleavage to 5'-phosphomonoester.. In terms of biological role, digests double-stranded RNA. Involved in the processing of primary rRNA transcript to yield the immediate precursors to the large and small rRNAs (23S and 16S). Processes some mRNAs, and tRNAs when they are encoded in the rRNA operon. Processes pre-crRNA and tracrRNA of type II CRISPR loci if present in the organism. The chain is Ribonuclease 3 from Blochmanniella pennsylvanica (strain BPEN).